Consider the following 464-residue polypeptide: Soluble pyridine nucleotide transhydrogenase (464 aa).

An FAD-binding site is contributed by 35 to 44 (DSRRQVGGNC).

It belongs to the class-I pyridine nucleotide-disulfide oxidoreductase family. FAD serves as cofactor.

Its subcellular location is the cytoplasm. The enzyme catalyses NAD(+) + NADPH = NADH + NADP(+). Its function is as follows. Conversion of NADPH, generated by peripheral catabolic pathways, to NADH, which can enter the respiratory chain for energy generation. The protein is Soluble pyridine nucleotide transhydrogenase of Pseudomonas fluorescens (strain SBW25).